The chain runs to 333 residues: tRNA-dihydrouridine(16) synthase (333 aa).

Residues 19–21 (PMQ) and Gln-80 each bind FMN. Cys-110 functions as the Proton donor in the catalytic mechanism. FMN contacts are provided by residues Lys-151, 211–213 (NGD), and 235–236 (GR).

This sequence belongs to the Dus family. DusC subfamily. The cofactor is FMN.

The catalysed reaction is 5,6-dihydrouridine(16) in tRNA + NADP(+) = uridine(16) in tRNA + NADPH + H(+). The enzyme catalyses 5,6-dihydrouridine(16) in tRNA + NAD(+) = uridine(16) in tRNA + NADH + H(+). In terms of biological role, catalyzes the synthesis of 5,6-dihydrouridine (D), a modified base found in the D-loop of most tRNAs, via the reduction of the C5-C6 double bond in target uridines. Specifically modifies U16 in tRNAs. The polypeptide is tRNA-dihydrouridine(16) synthase (Neisseria meningitidis serogroup B (strain ATCC BAA-335 / MC58)).